The following is a 369-amino-acid chain: MPNTALSTAELTDDQVHDILTTALARILRRIDLTQQEMRQIMTIIMDGRCPDAMLGALLTGLNMKSESIDEITASASVMLDFAKKIEPKNRTNMVDIVGTGGDGSNLFNVSTASAFVAAAAGATVAKHGNRGVSSKSGSSDLLEQAGLNLNITPEQTRECIETQGIGFLFAPNHHTAMKHAIPVRRALKVRTIFNILGPLTNPAGVKNLVVGVFTDNMCEPLAHVFKNLGAKHVMVVGSKDRLDEISLATSTKVAELKDGEVTVYDIFPEDAGIDSQTLVGLDVNSSEQSLQLIQAALSGKETNDFGIAQNKVNKARDMIALNAGAAIYVAGLASNFPNGVNQAQNILQSGKALQKMQALAEYTQTFDR.

5-phospho-alpha-D-ribose 1-diphosphate-binding positions include glycine 99, 102 to 103 (GD), 109 to 112 (NVST), 127 to 135 (KHGNRGVSS), and serine 139. Glycine 99 lines the anthranilate pocket. Serine 111 lines the Mg(2+) pocket. Residue asparagine 130 participates in anthranilate binding. Arginine 185 lines the anthranilate pocket. The Mg(2+) site is built by aspartate 244 and glutamate 245.

The protein belongs to the anthranilate phosphoribosyltransferase family. As to quaternary structure, homodimer. The cofactor is Mg(2+).

It catalyses the reaction N-(5-phospho-beta-D-ribosyl)anthranilate + diphosphate = 5-phospho-alpha-D-ribose 1-diphosphate + anthranilate. Its pathway is amino-acid biosynthesis; L-tryptophan biosynthesis; L-tryptophan from chorismate: step 2/5. Catalyzes the transfer of the phosphoribosyl group of 5-phosphorylribose-1-pyrophosphate (PRPP) to anthranilate to yield N-(5'-phosphoribosyl)-anthranilate (PRA). The protein is Anthranilate phosphoribosyltransferase of Psychrobacter sp. (strain PRwf-1).